Here is a 131-residue protein sequence, read N- to C-terminus: M-zodatoxin-Lt8m (131 aa).

Positions 1 to 20 (MKYFVVALALVAAFACIAES) are cleaved as a signal peptide. The propeptide occupies 21–60 (KPAESEHELAEVEEENELADLEDAVWLEHLADLSDLEEAR).

It belongs to the cationic peptide 06 (cytoinsectotoxin) family. As to expression, expressed by the venom gland.

Its subcellular location is the secreted. Functionally, insecticidal, cytolytic and antimicrobial peptide. Forms voltage-dependent, ion-permeable channels in membranes. At high concentration causes cell membrane lysis. The sequence is that of M-zodatoxin-Lt8m (cit 1-13) from Lachesana tarabaevi (Spider).